Here is a 1462-residue protein sequence, read N- to C-terminus: Gag-Pol polyprotein (1462 aa).

G2 carries the N-myristoyl glycine; by host lipid modification. The short motif at 16–22 is the Nuclear export signal element; it reads WESIRLK. Positions 26 to 32 match the Nuclear localization signal motif; that stretch reads RKKYLIK. 2 stretches are compositionally biased toward polar residues: residues 113–125 and 135–151; these read NNSTATSSGQRQN and PSGNTGNTGRATETPSG. The tract at residues 113–153 is disordered; it reads NNSTATSSGQRQNAGEKEETVPPSGNTGNTGRATETPSGSR. Residue Y155 is modified to Phosphotyrosine; by host. CCHC-type zinc fingers lie at residues 417–434 and 438–455; these read LQCFNCGKVGHTARNCRA and KGCWRCGQEGHQMKDCTT. Residues 482–513 form a disordered region; sequence EHPREREGSGAGDSTDTSGANCPTTGDDDERR. Residues 535 to 604 enclose the Peptidase A2 domain; the sequence is CQALLDTGAD…TPINIIGRNI (70 aa). The active-site For protease activity; shared with dimeric partner is D540. In terms of domain architecture, Reverse transcriptase spans 658–848; the sequence is EGKISAVGPE…PPFMWMGYEL (191 aa). The Mg(2+) site is built by D724, D799, and D800. An RT 'primer grip' region spans residues 841–849; the sequence is FMWMGYELH. The short motif at 1012 to 1028 is the Tryptophan repeat motif element; the sequence is WSQWWTDYWQVTWVPEW. One can recognise an RNase H type-1 domain in the interval 1048–1171; that stretch reads IPEAETFYVD…VDKLVSKNIR (124 aa). 4 residues coordinate Mg(2+): D1057, E1092, D1112, and D1163. Residues 1177 to 1218 form an Integrase-type zinc finger; that stretch reads DGINEAQEDHDKYHSNWKALADEYNLPPVVAKEIIAQCPKCH. Residues H1186, H1190, C1214, and C1217 each contribute to the Zn(2+) site. Residues 1228–1378 enclose the Integrase catalytic domain; it reads VDYSPEIWQI…TAGERLLDIL (151 aa). The Mg(2+) site is built by D1238 and D1290. Residues 1397-1444 constitute a DNA-binding region (integrase-type); it reads FRVYYRDARDPIWKGPARLLWKGEGAVVIKEGEDIKVVPRRKAKIIKE.

Homotrimer. Interacts with gp41 (via C-terminus). In terms of assembly, homodimer. The active site consists of two apposed aspartic acid residues. As to quaternary structure, heterodimer of p66 RT and p51 RT (RT p66/p51). Heterodimerization of RT is essential for DNA polymerase activity. Despite the sequence identities, p66 RT and p51 RT have distinct folding. Homotetramer; may further associate as a homohexadecamer. Mg(2+) serves as cofactor. Specific enzymatic cleavages by the viral protease yield mature proteins. The protease is released by autocatalytic cleavage. The polyprotein is cleaved during and after budding, this process is termed maturation. Proteolytic cleavage of p66 RT removes the RNase H domain to yield the p51 RT subunit. In terms of processing, capsid protein p24 is phosphorylated.

It is found in the virion. Its subcellular location is the host nucleus. It localises to the host cytoplasm. The protein localises to the host cell membrane. It catalyses the reaction Specific for a P1 residue that is hydrophobic, and P1' variable, but often Pro.. The enzyme catalyses Endohydrolysis of RNA in RNA/DNA hybrids. Three different cleavage modes: 1. sequence-specific internal cleavage of RNA. Human immunodeficiency virus type 1 and Moloney murine leukemia virus enzymes prefer to cleave the RNA strand one nucleotide away from the RNA-DNA junction. 2. RNA 5'-end directed cleavage 13-19 nucleotides from the RNA end. 3. DNA 3'-end directed cleavage 15-20 nucleotides away from the primer terminus.. It carries out the reaction 3'-end directed exonucleolytic cleavage of viral RNA-DNA hybrid.. The catalysed reaction is DNA(n) + a 2'-deoxyribonucleoside 5'-triphosphate = DNA(n+1) + diphosphate. With respect to regulation, the viral protease is inhibited by many synthetic protease inhibitors (PIs), such as amprenavir, atazanavir, indinavir, loprinavir, nelfinavir, ritonavir and saquinavir. RT can be inhibited either by nucleoside RT inhibitors (NRTIs) or by non nucleoside RT inhibitors (NNRTIs). NRTIs act as chain terminators, whereas NNRTIs inhibit DNA polymerization by binding a small hydrophobic pocket near the RT active site and inducing an allosteric change in this region. Classical NRTIs are abacavir, adefovir (PMEA), didanosine (ddI), lamivudine (3TC), stavudine (d4T), tenofovir (PMPA), zalcitabine (ddC), and zidovudine (AZT). Classical NNRTIs are atevirdine (BHAP U-87201E), delavirdine, efavirenz (DMP-266), emivirine (I-EBU), and nevirapine (BI-RG-587). The tritherapies used as a basic effective treatment of AIDS associate two NRTIs and one NNRTI. Use of protease inhibitors in tritherapy regimens permit more ambitious therapeutic strategies. Gag-Pol polyprotein and Gag polyprotein may regulate their own translation, by the binding genomic RNA in the 5'-UTR. At low concentration, Gag-Pol and Gag would promote translation, whereas at high concentration, the polyproteins encapsidate genomic RNA and then shut off translation. Its function is as follows. Matrix protein p17 has two main functions: in infected cell, it targets Gag and Gag-pol polyproteins to the plasma membrane via a multipartite membrane-binding signal, that includes its myristointegration complex. The myristoylation signal and the NLS exert conflicting influences its subcellular localization. The key regulation of these motifs might be phosphorylation of a portion of MA molecules on the C-terminal tyrosine at the time of virus maturation, by virion-associated cellular tyrosine kinase. Implicated in the release from host cell mediated by Vpu. In terms of biological role, capsid protein p24 forms the conical core that encapsulates the genomic RNA-nucleocapsid complex in the virion. The core is constituted by capsid protein hexamer subunits. The core is disassembled soon after virion entry. Interaction with host PPIA/CYPA protects the virus from restriction by host TRIM5-alpha and from an unknown antiviral activity in host cells. This capsid restriction by TRIM5 is one of the factors which restricts SIV to the simian species. Functionally, nucleocapsid protein p7 encapsulates and protects viral dimeric unspliced (genomic) RNA. Binds these RNAs through its zinc fingers. Facilitates rearangement of nucleic acid secondary structure during retrotranscription of genomic RNA. This capability is referred to as nucleic acid chaperone activity. The aspartyl protease mediates proteolytic cleavages of Gag and Gag-Pol polyproteins during or shortly after the release of the virion from the plasma membrane. Cleavages take place as an ordered, step-wise cascade to yield mature proteins. This process is called maturation. Displays maximal activity during the budding process just prior to particle release from the cell. Also cleaves Nef and Vif, probably concomitantly with viral structural proteins on maturation of virus particles. Hydrolyzes host EIF4GI and PABP1 in order to shut off the capped cellular mRNA translation. The resulting inhibition of cellular protein synthesis serves to ensure maximal viral gene expression and to evade host immune response. Its function is as follows. Reverse transcriptase/ribonuclease H (RT) is a multifunctional enzyme that converts the viral dimeric RNA genome into dsDNA in the cytoplasm, shortly after virus entry into the cell. This enzyme displays a DNA polymerase activity that can copy either DNA or RNA templates, and a ribonuclease H (RNase H) activity that cleaves the RNA strand of RNA-DNA heteroduplexes in a partially processive 3' to 5' endonucleasic mode. Conversion of viral genomic RNA into dsDNA requires many steps. A tRNA binds to the primer-binding site (PBS) situated at the 5'-end of the viral RNA. RT uses the 3' end of the tRNA primer to perform a short round of RNA-dependent minus-strand DNA synthesis. The reading proceeds through the U5 region and ends after the repeated (R) region which is present at both ends of viral RNA. The portion of the RNA-DNA heteroduplex is digested by the RNase H, resulting in a ssDNA product attached to the tRNA primer. This ssDNA/tRNA hybridizes with the identical R region situated at the 3' end of viral RNA. This template exchange, known as minus-strand DNA strong stop transfer, can be either intra- or intermolecular. RT uses the 3' end of this newly synthesized short ssDNA to perform the RNA-dependent minus-strand DNA synthesis of the whole template. RNase H digests the RNA template except for two polypurine tracts (PPTs) situated at the 5'-end and near the center of the genome. It is not clear if both polymerase and RNase H activities are simultaneous. RNase H can probably proceed both in a polymerase-dependent (RNA cut into small fragments by the same RT performing DNA synthesis) and a polymerase-independent mode (cleavage of remaining RNA fragments by free RTs). Secondly, RT performs DNA-directed plus-strand DNA synthesis using the PPTs that have not been removed by RNase H as primers. PPTs and tRNA primers are then removed by RNase H. The 3' and 5' ssDNA PBS regions hybridize to form a circular dsDNA intermediate. Strand displacement synthesis by RT to the PBS and PPT ends produces a blunt ended, linear dsDNA copy of the viral genome that includes long terminal repeats (LTRs) at both ends. In terms of biological role, integrase catalyzes viral DNA integration into the host chromosome, by performing a series of DNA cutting and joining reactions. This enzyme activity takes place after virion entry into a cell and reverse transcription of the RNA genome in dsDNA. The first step in the integration process is 3' processing. This step requires a complex comprising the viral genome, matrix protein, Vpr and integrase. This complex is called the pre-integration complex (PIC). The integrase protein removes 2 nucleotides from each 3' end of the viral DNA, leaving recessed CA OH's at the 3' ends. In the second step, the PIC enters cell nucleus. This process is mediated through integrase and Vpr proteins, and allows the virus to infect a non dividing cell. This ability to enter the nucleus is specific of lentiviruses, other retroviruses cannot and rely on cell division to access cell chromosomes. In the third step, termed strand transfer, the integrase protein joins the previously processed 3' ends to the 5' ends of strands of target cellular DNA at the site of integration. The 5'-ends are produced by integrase-catalyzed staggered cuts, 5 bp apart. A Y-shaped, gapped, recombination intermediate results, with the 5'-ends of the viral DNA strands and the 3' ends of target DNA strands remaining unjoined, flanking a gap of 5 bp. The last step is viral DNA integration into host chromosome. This involves host DNA repair synthesis in which the 5 bp gaps between the unjoined strands are filled in and then ligated. Since this process occurs at both cuts flanking the SIV genome, a 5 bp duplication of host DNA is produced at the ends of SIV integration. Alternatively, Integrase may catalyze the excision of viral DNA just after strand transfer, this is termed disintegration. The polypeptide is Gag-Pol polyprotein (gag-pol) (Simian immunodeficiency virus (isolate TAN1) (SIV-cpz)).